The primary structure comprises 261 residues: tRNA (guanine-N(7)-)-methyltransferase (261 aa).

S-adenosyl-L-methionine is bound by residues Glu-75, Glu-100, Asp-127, and Asp-150. Asp-150 is a catalytic residue. Lys-154 contributes to the substrate binding site. The interval 156-161 is interaction with RNA; that stretch reads RHNKRR. Substrate contacts are provided by residues Asp-186 and 223-226; that span reads THFE.

Belongs to the class I-like SAM-binding methyltransferase superfamily. TrmB family.

The enzyme catalyses guanosine(46) in tRNA + S-adenosyl-L-methionine = N(7)-methylguanosine(46) in tRNA + S-adenosyl-L-homocysteine. Its pathway is tRNA modification; N(7)-methylguanine-tRNA biosynthesis. Functionally, catalyzes the formation of N(7)-methylguanine at position 46 (m7G46) in tRNA. This Xanthomonas campestris pv. campestris (strain 8004) protein is tRNA (guanine-N(7)-)-methyltransferase.